The following is a 262-amino-acid chain: Acyl-[acyl-carrier-protein]--UDP-N-acetylglucosamine O-acyltransferase (262 aa).

It belongs to the transferase hexapeptide repeat family. LpxA subfamily. In terms of assembly, homotrimer.

Its subcellular location is the cytoplasm. The enzyme catalyses a (3R)-hydroxyacyl-[ACP] + UDP-N-acetyl-alpha-D-glucosamine = a UDP-3-O-[(3R)-3-hydroxyacyl]-N-acetyl-alpha-D-glucosamine + holo-[ACP]. The protein operates within glycolipid biosynthesis; lipid IV(A) biosynthesis; lipid IV(A) from (3R)-3-hydroxytetradecanoyl-[acyl-carrier-protein] and UDP-N-acetyl-alpha-D-glucosamine: step 1/6. Its function is as follows. Involved in the biosynthesis of lipid A, a phosphorylated glycolipid that anchors the lipopolysaccharide to the outer membrane of the cell. The chain is Acyl-[acyl-carrier-protein]--UDP-N-acetylglucosamine O-acyltransferase from Burkholderia ambifaria (strain MC40-6).